Consider the following 441-residue polypeptide: Cysteine desulfurase, mitosomal (441 aa).

Residues 107 to 108, Asn-189, Gln-217, and 237 to 239 contribute to the pyridoxal 5'-phosphate site; these read AT and SGH. Lys-240 is modified (N6-(pyridoxal phosphate)lysine). Residue Thr-277 participates in pyridoxal 5'-phosphate binding. Cys-367 acts as the Cysteine persulfide intermediate in catalysis. Cys-367 lines the [2Fe-2S] cluster pocket.

The protein belongs to the class-V pyridoxal-phosphate-dependent aminotransferase family. NifS/IscS subfamily. As to quaternary structure, interacts with ISD11. The cofactor is pyridoxal 5'-phosphate.

The protein resides in the mitosome. The enzyme catalyses (sulfur carrier)-H + L-cysteine = (sulfur carrier)-SH + L-alanine. Functionally, catalyzes the removal of elemental sulfur from cysteine to produce alanine. It supplies the inorganic sulfur for iron-sulfur (Fe-S) clusters in mitosomes. In Trachipleistophora hominis (Microsporidian parasite), this protein is Cysteine desulfurase, mitosomal.